A 126-amino-acid chain; its full sequence is Aspartate 1-decarboxylase (126 aa).

The active-site Schiff-base intermediate with substrate; via pyruvic acid is the Ser-25. Ser-25 carries the pyruvic acid (Ser) modification. Residue Thr-57 participates in substrate binding. Catalysis depends on Tyr-58, which acts as the Proton donor. 73-75 contacts substrate; it reads GAA.

Belongs to the PanD family. In terms of assembly, heterooctamer of four alpha and four beta subunits. Requires pyruvate as cofactor. Post-translationally, is synthesized initially as an inactive proenzyme, which is activated by self-cleavage at a specific serine bond to produce a beta-subunit with a hydroxyl group at its C-terminus and an alpha-subunit with a pyruvoyl group at its N-terminus.

The protein resides in the cytoplasm. It carries out the reaction L-aspartate + H(+) = beta-alanine + CO2. It participates in cofactor biosynthesis; (R)-pantothenate biosynthesis; beta-alanine from L-aspartate: step 1/1. In terms of biological role, catalyzes the pyruvoyl-dependent decarboxylation of aspartate to produce beta-alanine. This is Aspartate 1-decarboxylase from Yersinia pestis bv. Antiqua (strain Antiqua).